The chain runs to 149 residues: MERTFIAIKPDGVQRGLVGTIIGRFEQKGFKLVGLKQLKPSRELAEQHYAVHRERPFFNGLVEFITSGPIVAIVLEGEGVVAAARKLIGATNPLTAEPGTIRGDFGVNIGRNIIHGSDAIETAQQEIALWFSPAELSDWTPTIQPWLYE.

K9, F57, R85, T91, R102, and N112 together coordinate ATP. The active-site Pros-phosphohistidine intermediate is the H115.

It belongs to the NDK family. In terms of assembly, homotetramer. Mg(2+) is required as a cofactor.

It is found in the cytoplasm. The catalysed reaction is dZDP + ATP = dZTP + ADP. It carries out the reaction a 2'-deoxyribonucleoside 5'-diphosphate + ATP = a 2'-deoxyribonucleoside 5'-triphosphate + ADP. The enzyme catalyses a ribonucleoside 5'-diphosphate + ATP = a ribonucleoside 5'-triphosphate + ADP. Its pathway is purine metabolism. Functionally, major role in the synthesis of nucleoside triphosphates other than ATP. The ATP gamma phosphate is transferred to the NDP beta phosphate via a ping-pong mechanism, using a phosphorylated active-site intermediate. (Microbial infection) Catalyzes the phosphorylation of dZDP to dZTP, when the bacterium is infected by a phage that produces the substrate for the synthesis of dZTP (2- amino-2'-deoxyadenosine 5'-triphosphate), which is then used by the phage as a DNA polymerase substrate. The sequence is that of Nucleoside diphosphate kinase from Synechococcus elongatus (strain ATCC 33912 / PCC 7942 / FACHB-805) (Anacystis nidulans R2).